The primary structure comprises 779 residues: Probable ATP-dependent RNA helicase DHX40 (779 aa).

Residues 1–53 (MSRFPAVAGRAPRRQEEGERSRDLQEERPSAVCIADREEKGCTSQEGGTTPTF) are disordered. Basic and acidic residues predominate over residues 13-41 (RRQEEGERSRDLQEERPSAVCIADREEKG). The segment covering 42 to 53 (CTSQEGGTTPTF) has biased composition (polar residues). The Helicase ATP-binding domain occupies 63 to 231 (IQAVRDNSFL…FGNCPIFDIP (169 aa)). 76–83 (GNTGSGKT) contributes to the ATP binding site. The DEAH box signature appears at 173 to 176 (DEAH). The Helicase C-terminal domain occupies 263-442 (TMDIHLNEMA…SVVLTLKCLA (180 aa)). Residues 737-779 (SKDVLKKMQRRNDDKSISDARARFLERKQQRTQDHSDTRKETG) are disordered.

The protein belongs to the DEAD box helicase family. DEAH subfamily.

It catalyses the reaction ATP + H2O = ADP + phosphate + H(+). Functionally, probable ATP-dependent RNA helicase. This chain is Probable ATP-dependent RNA helicase DHX40 (DHX40), found in Pongo abelii (Sumatran orangutan).